We begin with the raw amino-acid sequence, 396 residues long: Tryptophan synthase beta chain (396 aa).

Lysine 88 is modified (N6-(pyridoxal phosphate)lysine).

The protein belongs to the TrpB family. Tetramer of two alpha and two beta chains. It depends on pyridoxal 5'-phosphate as a cofactor.

The catalysed reaction is (1S,2R)-1-C-(indol-3-yl)glycerol 3-phosphate + L-serine = D-glyceraldehyde 3-phosphate + L-tryptophan + H2O. Its pathway is amino-acid biosynthesis; L-tryptophan biosynthesis; L-tryptophan from chorismate: step 5/5. In terms of biological role, the beta subunit is responsible for the synthesis of L-tryptophan from indole and L-serine. In Shewanella baltica (strain OS155 / ATCC BAA-1091), this protein is Tryptophan synthase beta chain.